The following is a 183-amino-acid chain: Segregation and condensation protein B (183 aa).

Belongs to the ScpB family. In terms of assembly, homodimer. Homodimerization may be required to stabilize the binding of ScpA to the Smc head domains. Component of a cohesin-like complex composed of ScpA, ScpB and the Smc homodimer, in which ScpA and ScpB bind to the head domain of Smc. The presence of the three proteins is required for the association of the complex with DNA.

The protein resides in the cytoplasm. Functionally, participates in chromosomal partition during cell division. May act via the formation of a condensin-like complex containing Smc and ScpA that pull DNA away from mid-cell into both cell halves. The protein is Segregation and condensation protein B of Streptococcus pyogenes serotype M12 (strain MGAS2096).